Here is a 146-residue protein sequence, read N- to C-terminus: Negative cofactor 2 complex subunit beta (146 aa).

The tract at residues 124–146 (FRQSRSRLHHNSVSDPVKSEDSS) is disordered. A phosphoserine mark is found at Ser-135, Ser-137, and Ser-142.

In terms of assembly, component of the NC2 (negative cofactor 2) complex composed of BUR6 and NCB2. The NC2 complex associates with SPT15/TBP. Interacts with SPT15/TBP.

The protein resides in the nucleus. Functionally, component of the NC2 complex which represses RNA polymerase II transcription through binding to SPT15/TBP and thereby inhibiting the assembly of the preinitiation complex. The NC2 complex may also mediate transcriptional activation from TATA-driven promoters through association with SPT15/TBP. The polypeptide is Negative cofactor 2 complex subunit beta (NCB2) (Saccharomyces cerevisiae (strain ATCC 204508 / S288c) (Baker's yeast)).